A 313-amino-acid polypeptide reads, in one-letter code: Undecaprenyl-diphosphatase (313 aa).

The next 6 helical transmembrane spans lie at 121-141, 152-172, 187-207, 225-245, 259-279, and 290-310; these read YRIG…GFLF, LWLV…AEHY, GLVM…RSGA, FSFL…LPDA, QLLV…AWLL, and FVGY…AGVI.

Belongs to the UppP family.

Its subcellular location is the cell membrane. It carries out the reaction di-trans,octa-cis-undecaprenyl diphosphate + H2O = di-trans,octa-cis-undecaprenyl phosphate + phosphate + H(+). In terms of biological role, catalyzes the dephosphorylation of undecaprenyl diphosphate (UPP). Confers resistance to bacitracin. The protein is Undecaprenyl-diphosphatase of Nocardia farcinica (strain IFM 10152).